A 127-amino-acid chain; its full sequence is uncharacterized protein (127 aa).

A signal peptide spans 1-26; that stretch reads MKAIYALLAVVALALVAVSLFSQSDS.

This is an uncharacterized protein from Archaeoglobus fulgidus (strain ATCC 49558 / DSM 4304 / JCM 9628 / NBRC 100126 / VC-16).